A 121-amino-acid polypeptide reads, in one-letter code: MNHAPHLYFAWQQLVEKSQLMLRLATEEQWDELIASEMAYVNAVQEIAHLTEEIDPSTTMQEQLRPMLRLILDNESKVKQLLQIRMDELAKLVGQSSVQKSVLSAYGDQGGFVLAPQDNLF.

The interval 1-50 (MNHAPHLYFAWQQLVEKSQLMLRLATEEQWDELIASEMAYVNAVQEIAHL) is required for homodimerization. The segment at 60–98 (MQEQLRPMLRLILDNESKVKQLLQIRMDELAKLVGQSSV) is fliD binding.

The protein belongs to the FliT family. As to quaternary structure, homodimer. Interacts with FliD and FlhC.

The protein localises to the cytoplasm. It localises to the cytosol. Dual-function protein that regulates the transcription of class 2 flagellar operons and that also acts as an export chaperone for the filament-capping protein FliD. As a transcriptional regulator, acts as an anti-FlhDC factor; it directly binds FlhC, thus inhibiting the binding of the FlhC/FlhD complex to class 2 promoters, resulting in decreased expression of class 2 flagellar operons. As a chaperone, effects FliD transition to the membrane by preventing its premature polymerization, and by directing it to the export apparatus. The chain is Flagellar protein FliT from Escherichia coli O139:H28 (strain E24377A / ETEC).